The primary structure comprises 366 residues: Aminomethyltransferase (366 aa).

Belongs to the GcvT family. The glycine cleavage system is composed of four proteins: P, T, L and H.

The enzyme catalyses N(6)-[(R)-S(8)-aminomethyldihydrolipoyl]-L-lysyl-[protein] + (6S)-5,6,7,8-tetrahydrofolate = N(6)-[(R)-dihydrolipoyl]-L-lysyl-[protein] + (6R)-5,10-methylene-5,6,7,8-tetrahydrofolate + NH4(+). Its function is as follows. The glycine cleavage system catalyzes the degradation of glycine. The polypeptide is Aminomethyltransferase (Bacillus cereus (strain ATCC 10987 / NRS 248)).